The sequence spans 83 residues: Large ribosomal subunit protein eL31 (83 aa).

The protein belongs to the eukaryotic ribosomal protein eL31 family.

This is Large ribosomal subunit protein eL31 from Methanococcus aeolicus (strain ATCC BAA-1280 / DSM 17508 / OCM 812 / Nankai-3).